The following is a 513-amino-acid chain: MEMAKEQELILVLDFGSQYNQLITRRIREMGVYSELHDHEISIEEIKKMNPKGIILSGGPNSVYEEGSFTIDPEIYNLGIPVLGICYGMQLTTKLLGGKVERANEREYGKAIINAKSDELFAGLPAEQTVWMSHSDKVIEIPEGFEVIADSPSTDYAAIEDKKRRIYGVQFHPEVRHTEYGNDLLNNFVRRVCDCRGQWTMENFIEIEIEKIRQRVGDRRVLCAMSGGVDSSVVAVLLHKAIGDQLTCIFVDHGLLRKGEGDMVMEQFGEGFNMNIIRVNAKDRFMNKLKGVSDPEQKRKIIGNEFVYVFDDEASKLKGVDFLAQGTLYTDVIESGTKTAQTIKSHHNVGGLPEDMEFELIEPINTLFKDEVRKLGIELGIPEHLVWRQPFPGPGLGIRVLGEITEDKLEIVRESDAILRQVIREEGLEREIWQYFTVLPNIQSVGVMGDYRTYDHTVGIRAVTSIDGMTSDFARIDWEVLQKISSRIVNEVDHVNRVVYDITSKPPSTIEWE.

The region spanning leucine 9–glutamine 198 is the Glutamine amidotransferase type-1 domain. Catalysis depends on cysteine 86, which acts as the Nucleophile. Active-site residues include histidine 172 and glutamate 174. The 190-residue stretch at tryptophan 199–arginine 388 folds into the GMPS ATP-PPase domain. Serine 226–serine 232 is an ATP binding site.

As to quaternary structure, homodimer.

The enzyme catalyses XMP + L-glutamine + ATP + H2O = GMP + L-glutamate + AMP + diphosphate + 2 H(+). The protein operates within purine metabolism; GMP biosynthesis; GMP from XMP (L-Gln route): step 1/1. In terms of biological role, catalyzes the synthesis of GMP from XMP. In Staphylococcus aureus (strain USA300), this protein is GMP synthase [glutamine-hydrolyzing].